The primary structure comprises 460 residues: MIAFNMDEHQLKHIHLIGIGGISMSAIAEILLENGYHISGSDMKESNLTHKLRDHGAEIFIGHASENIQNPDLVVYTAAVKADNPERIRAEELGIPLADRAEMLGQIMKKYEKAIAVAGSHGKTTTTSLISLLMEYSNLDPTILVGGELDEIGGNIKIGQSQHFITEACEYVESFLKFYPFIGIILNIDEDHLDYFKDIEHIKSAFKKFAQRIPKEGFLIASYDDAHVREISRDLDCHVITYGIKTKSQFMAHNIEFSFEGLPSFDVSFEGKTIGSFSLNIPGLHNVYNSLAAIATTYVLGVDPVAISKHITRFKGIHRRFDLLGEVKGAKVIDDYAHHPVEIRATLEAAKKYPHKKIWCVFQPHTYSRTQALLKDFAKSFYLADHVIITDIYAAREKDEGIVNSQGLVNLIVQEHPAQYIGGFEEISRYLYDHIEAGDIVLTMGAGDVYLIAQMLLAEK.

119-125 (GSHGKTT) is an ATP binding site.

It belongs to the MurCDEF family.

It localises to the cytoplasm. It carries out the reaction UDP-N-acetyl-alpha-D-muramate + L-alanine + ATP = UDP-N-acetyl-alpha-D-muramoyl-L-alanine + ADP + phosphate + H(+). Its pathway is cell wall biogenesis; peptidoglycan biosynthesis. In terms of biological role, cell wall formation. In Alkaliphilus metalliredigens (strain QYMF), this protein is UDP-N-acetylmuramate--L-alanine ligase.